The sequence spans 247 residues: ATP synthase subunit a (247 aa).

6 consecutive transmembrane segments (helical) span residues 24-44 (IAFTNSSAYMLVAVVLTSLLM), 82-102 (FFPFVFTIFMLVTVSNLVGIV), 112-132 (IIVTAALAFLVFFTVLIYGFY), 141-161 (LFVPSGIPIVILPLVVAIEVI), 194-214 (MLGAMGIVGVFGAVLPLALVV), and 219-239 (LELLVAFLQAYVFTILTCIYI).

This sequence belongs to the ATPase A chain family. In terms of assembly, F-type ATPases have 2 components, CF(1) - the catalytic core - and CF(0) - the membrane proton channel. CF(1) has five subunits: alpha(3), beta(3), gamma(1), delta(1), epsilon(1). CF(0) has three main subunits: a(1), b(2) and c(9-12). The alpha and beta chains form an alternating ring which encloses part of the gamma chain. CF(1) is attached to CF(0) by a central stalk formed by the gamma and epsilon chains, while a peripheral stalk is formed by the delta and b chains.

It localises to the cell inner membrane. Functionally, key component of the proton channel; it plays a direct role in the translocation of protons across the membrane. In Nitrobacter hamburgensis (strain DSM 10229 / NCIMB 13809 / X14), this protein is ATP synthase subunit a.